The sequence spans 447 residues: tRNA-2-methylthio-N(6)-dimethylallyladenosine synthase (447 aa).

The MTTase N-terminal domain occupies 10 to 128; it reads KLFCISTYGC…FPEYLHRVLQ (119 aa). [4Fe-4S] cluster is bound by residues cysteine 19, cysteine 55, cysteine 89, cysteine 165, cysteine 169, and cysteine 172. In terms of domain architecture, Radical SAM core spans 151 to 382; that stretch reads RKSDVKAFVT…EAINKKVVIK (232 aa). Positions 384-447 constitute a TRAM domain; the sequence is KEYEGKVVEV…PFSLIGEIVE (64 aa).

Belongs to the methylthiotransferase family. MiaB subfamily. Monomer. [4Fe-4S] cluster is required as a cofactor.

It is found in the cytoplasm. The catalysed reaction is N(6)-dimethylallyladenosine(37) in tRNA + (sulfur carrier)-SH + AH2 + 2 S-adenosyl-L-methionine = 2-methylsulfanyl-N(6)-dimethylallyladenosine(37) in tRNA + (sulfur carrier)-H + 5'-deoxyadenosine + L-methionine + A + S-adenosyl-L-homocysteine + 2 H(+). Catalyzes the methylthiolation of N6-(dimethylallyl)adenosine (i(6)A), leading to the formation of 2-methylthio-N6-(dimethylallyl)adenosine (ms(2)i(6)A) at position 37 in tRNAs that read codons beginning with uridine. This chain is tRNA-2-methylthio-N(6)-dimethylallyladenosine synthase, found in Clostridium perfringens (strain ATCC 13124 / DSM 756 / JCM 1290 / NCIMB 6125 / NCTC 8237 / Type A).